Here is a 240-residue protein sequence, read N- to C-terminus: MATKIFSLLMLLALSACVANATIFPQCSQAPIASLLPPYLPSMIASVCENPALQPYRLQQAIAASNIPLSPLLFQQSPALSLVQSLVQTIRAQQLQQLVLPVINQVALANLSPYSQQQQFLPFNQLSTLNPAAYLQQQLLPFSQLATAYSQQQQLLPFNQLAALNPAAYLQQQILLPFSQLAAANRASFLTQQQLLPFYQQFAANPATLLQLQQLLPFVQLALTDPAASYQQHIIGGALF.

Positions 1–21 (MATKIFSLLMLLALSACVANA) are cleaved as a signal peptide.

It belongs to the zein family.

Its function is as follows. Zeins are major seed storage proteins. This is Zein-alpha A20 from Zea mays (Maize).